The sequence spans 122 residues: Holo-[acyl-carrier-protein] synthase (122 aa).

Asp-8 and Glu-60 together coordinate Mg(2+).

Belongs to the P-Pant transferase superfamily. AcpS family. The cofactor is Mg(2+).

Its subcellular location is the cytoplasm. It catalyses the reaction apo-[ACP] + CoA = holo-[ACP] + adenosine 3',5'-bisphosphate + H(+). Transfers the 4'-phosphopantetheine moiety from coenzyme A to a Ser of acyl-carrier-protein. This Anaplasma phagocytophilum (strain HZ) protein is Holo-[acyl-carrier-protein] synthase.